The chain runs to 185 residues: Pro-adrenomedullin (185 aa).

A signal peptide spans 1–21 (MKLVSVALMYLGSLAFLGADT). R41 carries the arginine amide modification. Residues 45–92 (ELRMSSSYPTGLADVKAGPAQTLIRPQDMKGASRSPEDSSPDAARIRV) constitute a propeptide that is removed on maturation. The interval 60–87 (KAGPAQTLIRPQDMKGASRSPEDSSPDA) is disordered. C110 and C115 are joined by a disulfide. The disordered stretch occupies residues 133–185 (DNVAPRSKISPQGYGRRRRRSLPEAGPGRTLVSSKPQAHGAPAPPSGSAPHFL). Y146 is modified (tyrosine amide). A propeptide spans 148–185 (RRRRRSLPEAGPGRTLVSSKPQAHGAPAPPSGSAPHFL) (preproAM C-terminal fragment).

Belongs to the adrenomedullin family. Highest levels found in pheochromocytoma and adrenal medulla. Also found in lung, ventricle and kidney tissues.

The protein resides in the secreted. In terms of biological role, adrenomedullin/ADM and proadrenomedullin N-20 terminal peptide/PAMP are peptide hormones that act as potent hypotensive and vasodilatator agents. Numerous actions have been reported most related to the physiologic control of fluid and electrolyte homeostasis. In the kidney, ADM is diuretic and natriuretic, and both ADM and PAMP inhibit aldosterone secretion by direct adrenal actions. In pituitary gland, both peptides at physiologically relevant doses inhibit basal ACTH secretion. Both peptides appear to act in brain and pituitary gland to facilitate the loss of plasma volume, actions which complement their hypotensive effects in blood vessels. Its function is as follows. ADM function is mediated by the CALCRL-RAMP2 and CALCRL-RAMP3 receptor complexes with ADM showing the highest potency for the CALCRL-RAMP2 complex. The polypeptide is Pro-adrenomedullin (Homo sapiens (Human)).